The following is a 314-amino-acid chain: Putative S-adenosyl-L-methionine-dependent methyltransferase MAV_0301 (314 aa).

S-adenosyl-L-methionine is bound by residues Asp-132 and 161-162 (DL).

It belongs to the UPF0677 family.

In terms of biological role, exhibits S-adenosyl-L-methionine-dependent methyltransferase activity. This Mycobacterium avium (strain 104) protein is Putative S-adenosyl-L-methionine-dependent methyltransferase MAV_0301.